The chain runs to 365 residues: Putrescine 2-hydroxylase (365 aa).

In terms of domain architecture, Rieske spans 44–141 (GHELMVPEVG…LQNWNGLLFE (98 aa)). [2Fe-2S] cluster is bound by residues Cys81, His83, Cys100, and His103.

It belongs to the bacterial ring-hydroxylating dioxygenase alpha subunit family. [2Fe-2S] cluster serves as cofactor.

Its function is as follows. Rieske-type iron sulfur protein that can catalyze in vitro the 2-hydroxylation of putrescine, forming 2-hydroxyputrescine. May be involved in the biosynthesis of the cyclic hydroxamate siderophore alcaligin. The protein is Putrescine 2-hydroxylase of Ralstonia nicotianae (strain ATCC BAA-1114 / GMI1000) (Ralstonia solanacearum).